The chain runs to 593 residues: Melanopsin-A (593 aa).

Residues 1–77 (MMSGAAHSVR…VDVPDHAHYT (77 aa)) are Extracellular-facing. Residues 78–98 (IGAVILTVGITGMLGNFLVIY) traverse the membrane as a helical segment. Topologically, residues 99 to 112 (AFSRSRTLRTPANL) are cytoplasmic. The helical transmembrane segment at 113-133 (FIINLAITDFLMCATQAPIFF) threads the bilayer. Topologically, residues 134–150 (TTSMHKRWIFGEKGCEL) are extracellular. Cys-148 and Cys-226 are disulfide-bonded. A helical membrane pass occupies residues 151 to 171 (YAFCGALFGICSMITLMVIAV). The Cytoplasmic portion of the chain corresponds to 172–191 (DRYFVITRPLASIGVLSQKR). A helical transmembrane segment spans residues 192–212 (ALLILLVAWVYSLGWSLPPFF). The Extracellular segment spans residues 213–243 (GWSAYVPEGLLTSCTWDYMTFTPSVRAYTML). A helical transmembrane segment spans residues 244-264 (LFIFVFFIPLIVIIYCYFFIF). Residues 265 to 300 (RSIRTTNEAVGKINGDNKRDSMKRFQRLKNEWKMAK) are Cytoplasmic-facing. Residues 301–321 (IALIVILMYVISWSPYSTVAL) traverse the membrane as a helical segment. Residues 322 to 336 (TAFAGYSDFLTPYMN) are Extracellular-facing. A helical membrane pass occupies residues 337–357 (SVPAVIAKASAIHNPIIYAIT). N6-(retinylidene)lysine is present on Lys-344. Topologically, residues 358 to 593 (HPKYRLAIAK…HIDNHRPQYL (236 aa)) are cytoplasmic. Disordered stretches follow at residues 397 to 449 (TVTS…RQVS) and 547 to 593 (RSNV…PQYL). The segment covering 414–449 (TGKSRLSSASDSESGWTDTEADLSSMSSRPASRQVS) has biased composition (polar residues). The span at 581 to 593 (ESGHIDNHRPQYL) shows a compositional bias: basic and acidic residues.

It belongs to the G-protein coupled receptor 1 family. Opsin subfamily.

Its subcellular location is the cell membrane. In terms of biological role, photoreceptor implicated in non-image-forming responses to light. May be able to isomerize covalently bound all-trans retinal back to 11-cis retinal. This chain is Melanopsin-A (opn4a), found in Danio rerio (Zebrafish).